Consider the following 867-residue polypeptide: Respiratory burst oxidase homolog protein B (867 aa).

Residues 1-13 (MEIENTRDSDSMR) show a composition bias toward basic and acidic residues. A disordered region spans residues 1–20 (MEIENTRDSDSMRGSRVGFS). Over 1–322 (MEIENTRDSD…DYFIEDNWKR (322 aa)) the chain is Cytoplasmic. A phosphoserine; by CPK mark is found at serine 82 and serine 97. EF-hand-like regions lie at residues 141 to 149 (AVNGMLTKS) and 175 to 186 (RCITSPAVTKDE). EF-hand domains are found at residues 198–233 (SFDA…SASA) and 242–277 (NSDE…APSH). Ca(2+) is bound by residues aspartate 211, aspartate 213, aspartate 215, arginine 217, and glutamate 222. Residues 323–343 (IWVMALWLSICAGLFTWKFIQ) form a helical membrane-spanning segment. Residues 344-358 (YKRRAVFDVMGYCVS) lie on the Extracellular side of the membrane. Residues 359-379 (VAKGGAETTKFNMALVLLPVC) traverse the membrane as a helical segment. Residues 361 to 519 (KGGAETTKFN…LFVIVYVLFI (159 aa)) form the Ferric oxidoreductase domain. The Cytoplasmic portion of the chain corresponds to 380-407 (RNTITWLRSRTKLGKIIPFDDNINFHKV). Residues 408 to 428 (IAFGIAVGVGLHAISHLTCDF) traverse the membrane as a helical segment. The Extracellular segment spans residues 429-463 (PRLLHATDEEYEPMKPFFGDERPNNYWWFVKGTEG). A helical membrane pass occupies residues 464 to 484 (WTGVVMVVLMIIAYVLAQPWF). Topologically, residues 485-506 (RRNRLNLPSTIKKLTGFNAFWY) are cytoplasmic. Residues 507 to 527 (SHHLFVIVYVLFIIHGYFLYL) traverse the membrane as a helical segment. The Extracellular portion of the chain corresponds to 528–686 (SKKWYKKTTW…APAQDYKKYD (159 aa)). The FAD-binding FR-type domain maps to 558-681 (SGYKAVKILK…DGPYGAPAQD (124 aa)). The chain crosses the membrane as a helical span at residues 687 to 707 (VVLLVGLGIGATPLISIVKDV). The Cytoplasmic segment spans residues 708-867 (LNNIKQQKNI…TKFEFHKENF (160 aa)).

This sequence belongs to the RBOH (TC 5.B.1.3) family. As to quaternary structure, monomer and homodimer. Post-translationally, phosphorylation at Ser-82 and Ser-97 is required for full activity of RBOHB. Not phosphorylated at Ser-89. Phosphorylation at Ser-82 is induced by fungal elicitor treatment.

The protein resides in the cell membrane. With respect to regulation, inhibited by diphenylene iodinium (DPI). Its function is as follows. Calcium-dependent NADPH oxidase that generates superoxide. Involved in the massive phase II oxidative burst induced by pathogen infection. This is Respiratory burst oxidase homolog protein B (RBOHB) from Solanum tuberosum (Potato).